The following is a 204-amino-acid chain: Signal peptidase I (204 aa).

Residues 1–10 (MNLFKNFLKE) are Cytoplasmic-facing. Residues 11–30 (WGLFLLILSLLALSRIFFWS) traverse the membrane as a helical segment. Topologically, residues 31 to 204 (NVRVEGHSMD…FWPITRIGTF (174 aa)) are extracellular. Active-site residues include Ser-38 and Lys-76.

The protein belongs to the peptidase S26 family.

The protein localises to the cell membrane. The enzyme catalyses Cleavage of hydrophobic, N-terminal signal or leader sequences from secreted and periplasmic proteins.. In Streptococcus pneumoniae (strain ATCC BAA-255 / R6), this protein is Signal peptidase I (lepB).